The chain runs to 204 residues: MTEKLKQGIDQLGLKVAETIQQSMLAFLAFLQKWNQAYNLTAITEIKSMITHHLLDSLSILPYLKGDKILDVGSGAGFPGIPLAFACPEKKFTLIDSKAKKTAFLLQAASRFKITNVTIIQERVGSYQPGFYFDTITCRALGSVREIMEQTNHLLRSGGQWLIMKGAYPEKELRGTDASAIVHVLNVPGLKAERHLVEVKNNKG.

Glycine 73, phenylalanine 78, and arginine 139 together coordinate S-adenosyl-L-methionine.

Belongs to the methyltransferase superfamily. RNA methyltransferase RsmG family.

The protein resides in the cytoplasm. It carries out the reaction guanosine(527) in 16S rRNA + S-adenosyl-L-methionine = N(7)-methylguanosine(527) in 16S rRNA + S-adenosyl-L-homocysteine. Specifically methylates the N7 position of guanine in position 527 of 16S rRNA. This Coxiella burnetii (strain RSA 331 / Henzerling II) protein is Ribosomal RNA small subunit methyltransferase G.